Consider the following 129-residue polypeptide: Large ribosomal subunit protein uL22 (129 aa).

The protein belongs to the universal ribosomal protein uL22 family. As to quaternary structure, part of the 50S ribosomal subunit.

This protein binds specifically to 23S rRNA; its binding is stimulated by other ribosomal proteins, e.g. L4, L17, and L20. It is important during the early stages of 50S assembly. It makes multiple contacts with different domains of the 23S rRNA in the assembled 50S subunit and ribosome. Functionally, the globular domain of the protein is located near the polypeptide exit tunnel on the outside of the subunit, while an extended beta-hairpin is found that lines the wall of the exit tunnel in the center of the 70S ribosome. This Metamycoplasma hominis (strain ATCC 23114 / DSM 25592 / NBRC 14850 / NCTC 10111 / PG21) (Mycoplasma hominis) protein is Large ribosomal subunit protein uL22.